A 185-amino-acid chain; its full sequence is Translation initiation factor IF-3 (185 aa).

The protein belongs to the IF-3 family. Monomer.

Its subcellular location is the cytoplasm. Its function is as follows. IF-3 binds to the 30S ribosomal subunit and shifts the equilibrium between 70S ribosomes and their 50S and 30S subunits in favor of the free subunits, thus enhancing the availability of 30S subunits on which protein synthesis initiation begins. This Streptococcus pneumoniae serotype 19F (strain G54) protein is Translation initiation factor IF-3.